An 80-amino-acid chain; its full sequence is Defensin-like protein 2 (80 aa).

The first 29 residues, methionine 1–alanine 29, serve as a signal peptide directing secretion. Pyrrolidone carboxylic acid is present on glutamine 30. 4 disulfide bridges follow: cysteine 33-cysteine 80, cysteine 44-cysteine 65, cysteine 50-cysteine 74, and cysteine 54-cysteine 76.

This sequence belongs to the DEFL family.

It localises to the secreted. Possesses antifungal activity sensitive to inorganic cations. Induces potential changes in fungal membranes and increased K(+) efflux and Ca(2+) uptake. The sequence is that of Defensin-like protein 2 (AFP2) from Raphanus sativus (Radish).